A 109-amino-acid polypeptide reads, in one-letter code: N-cym protein (109 aa).

In terms of assembly, interacts with MYCN and GSK3B. Expressed in the neuronal cells of the cerebrum and cerebellum, spermatocytes of the testis, pancreatic cells and also the heart. Expressed in both primary and metastatic neuroblastomas and in thyroid tumors (at protein level). Expression is associated with poor prognosis in neuroblastoma. Expressed in the fetal brain, lung, liver and kidney at varying low levels.

The protein resides in the cytoplasm. It localises to the nucleus. Its function is as follows. Regulates stability of MYCN in neuroblastoma cells by inhibiting GSK3B-mediated MYCN phosphorylation. Inhibits GSK3B activity by promoting its phosphorylation at 'Ser-9'. This is N-cym protein (MYCNOS) from Homo sapiens (Human).